A 256-amino-acid chain; its full sequence is Small ribosomal subunit protein eS1 (256 aa).

The segment covering 1 to 18 has biased composition (basic residues); the sequence is MAVGKNKRLSKGKKGLKK. Residues 1–20 form a disordered region; the sequence is MAVGKNKRLSKGKKGLKKRT. N-acetylalanine; partial is present on Ala2.

The protein belongs to the eukaryotic ribosomal protein eS1 family. As to quaternary structure, component of the small ribosomal subunit. Mature ribosomes consist of a small (40S) and a large (60S) subunit. The 40S subunit contains about 33 different proteins and 1 molecule of RNA (18S). The 60S subunit contains about 49 different proteins and 3 molecules of RNA (25S, 5.8S and 5S).

It is found in the cytoplasm. This Talaromyces stipitatus (strain ATCC 10500 / CBS 375.48 / QM 6759 / NRRL 1006) (Penicillium stipitatum) protein is Small ribosomal subunit protein eS1 (rps1).